Here is an 846-residue protein sequence, read N- to C-terminus: Rho GTPase-activating protein 12 (846 aa).

In terms of domain architecture, SH3 spans 12–74 (PGQVYIEVEY…PAQYVKEVTR (63 aa)). Over residues 152–175 (LTHNNGKFNNDSHSPKVSSQNRTR) the composition is skewed to polar residues. The tract at residues 152 to 241 (LTHNNGKFNN…PPNQGRPDSP (90 aa)) is disordered. Residues Ser-165 and Ser-176 each carry the phosphoserine modification. The segment covering 191-200 (TSFSQEQSCD) has biased composition (polar residues). Ser-201, Ser-213, and Ser-215 each carry phosphoserine. Positions 224 to 234 (TEQIRATTPPN) are enriched in polar residues. Residues Thr-230 and Thr-231 each carry the phosphothreonine modification. Ser-240 is subject to Phosphoserine. Tyr-243 carries the post-translational modification Phosphotyrosine. WW domains follow at residues 265-298 (IQIN…PPRW) and 358-391 (DYTN…LPKY). The segment at 293–316 (WKPPRWTRDASISKGDFQNPGDQE) is disordered. Disordered stretches follow at residues 428 to 466 (DTND…DQEK) and 580 to 629 (ETDE…TKKN). Positions 445–461 (NESSPSSPKHQDTASSP) are enriched in polar residues. A PH domain is found at 463-575 (DQEKYGLLNV…WFKVLSSTIN (113 aa)). Residues 580 to 590 (ETDEGIEEEIP) show a composition bias toward acidic residues. Ser-592 is subject to Phosphoserine. Over residues 594-609 (GIEKHDKEKEQKDPKK) the composition is skewed to basic and acidic residues. Positions 656–844 (SNLANLCQRE…LILLELSSIF (189 aa)) constitute a Rho-GAP domain.

GTPase activator for the Rho-type GTPases by converting them to an inactive GDP-bound state. This chain is Rho GTPase-activating protein 12 (ARHGAP12), found in Homo sapiens (Human).